Here is a 257-residue protein sequence, read N- to C-terminus: NAD-capped RNA hydrolase NudC (257 aa).

Substrate-binding residues include Lys-25 and Arg-69. Cys-98 and Cys-101 together coordinate Zn(2+). Position 111 (Glu-111) interacts with substrate. Residues Cys-116 and Cys-119 each coordinate Zn(2+). Residue Tyr-124 coordinates substrate. Residues Pro-125–Thr-248 enclose the Nudix hydrolase domain. The a divalent metal cation site is built by Ala-158, Glu-174, and Glu-178. Positions Gly-159–Gly-180 match the Nudix box motif. Position 192–199 (Gln-192–Ser-199) interacts with substrate. A divalent metal cation is bound at residue Glu-219. Ala-241 contributes to the substrate binding site.

Belongs to the Nudix hydrolase family. NudC subfamily. As to quaternary structure, homodimer. Mg(2+) is required as a cofactor. It depends on Mn(2+) as a cofactor. The cofactor is Zn(2+).

The enzyme catalyses a 5'-end NAD(+)-phospho-ribonucleoside in mRNA + H2O = a 5'-end phospho-adenosine-phospho-ribonucleoside in mRNA + beta-nicotinamide D-ribonucleotide + 2 H(+). It carries out the reaction NAD(+) + H2O = beta-nicotinamide D-ribonucleotide + AMP + 2 H(+). It catalyses the reaction NADH + H2O = reduced beta-nicotinamide D-ribonucleotide + AMP + 2 H(+). Its function is as follows. mRNA decapping enzyme that specifically removes the nicotinamide adenine dinucleotide (NAD) cap from a subset of mRNAs by hydrolyzing the diphosphate linkage to produce nicotinamide mononucleotide (NMN) and 5' monophosphate mRNA. The NAD-cap is present at the 5'-end of some mRNAs and stabilizes RNA against 5'-processing. Has preference for mRNAs with a 5'-end purine. Catalyzes the hydrolysis of a broad range of dinucleotide pyrophosphates. The chain is NAD-capped RNA hydrolase NudC from Escherichia fergusonii (strain ATCC 35469 / DSM 13698 / CCUG 18766 / IAM 14443 / JCM 21226 / LMG 7866 / NBRC 102419 / NCTC 12128 / CDC 0568-73).